Consider the following 556-residue polypeptide: 2-succinyl-5-enolpyruvyl-6-hydroxy-3-cyclohexene-1-carboxylate synthase (556 aa).

It belongs to the TPP enzyme family. MenD subfamily. Homodimer. The cofactor is Mg(2+). Mn(2+) serves as cofactor. Thiamine diphosphate is required as a cofactor.

It catalyses the reaction isochorismate + 2-oxoglutarate + H(+) = 5-enolpyruvoyl-6-hydroxy-2-succinyl-cyclohex-3-ene-1-carboxylate + CO2. It functions in the pathway quinol/quinone metabolism; 1,4-dihydroxy-2-naphthoate biosynthesis; 1,4-dihydroxy-2-naphthoate from chorismate: step 2/7. It participates in quinol/quinone metabolism; menaquinone biosynthesis. Functionally, catalyzes the thiamine diphosphate-dependent decarboxylation of 2-oxoglutarate and the subsequent addition of the resulting succinic semialdehyde-thiamine pyrophosphate anion to isochorismate to yield 2-succinyl-5-enolpyruvyl-6-hydroxy-3-cyclohexene-1-carboxylate (SEPHCHC). This Klebsiella pneumoniae subsp. pneumoniae (strain ATCC 700721 / MGH 78578) protein is 2-succinyl-5-enolpyruvyl-6-hydroxy-3-cyclohexene-1-carboxylate synthase.